The following is a 1094-amino-acid chain: Isoleucine--tRNA ligase (1094 aa).

The 'HIGH' region motif lies at 53–63 (PFANGLPHYGH). The 'KMSKS' region motif lies at 624–628 (KLSKR). Lys-627 is an ATP binding site.

It belongs to the class-I aminoacyl-tRNA synthetase family. IleS type 2 subfamily. In terms of assembly, monomer. The cofactor is Zn(2+).

It localises to the cytoplasm. It carries out the reaction tRNA(Ile) + L-isoleucine + ATP = L-isoleucyl-tRNA(Ile) + AMP + diphosphate. In terms of biological role, catalyzes the attachment of isoleucine to tRNA(Ile). As IleRS can inadvertently accommodate and process structurally similar amino acids such as valine, to avoid such errors it has two additional distinct tRNA(Ile)-dependent editing activities. One activity is designated as 'pretransfer' editing and involves the hydrolysis of activated Val-AMP. The other activity is designated 'posttransfer' editing and involves deacylation of mischarged Val-tRNA(Ile). The sequence is that of Isoleucine--tRNA ligase from Rickettsia felis (strain ATCC VR-1525 / URRWXCal2) (Rickettsia azadi).